Here is a 739-residue protein sequence, read N- to C-terminus: Exocyst complex component 3-like protein (739 aa).

The mediates interaction with EXOC2, EXOC4 and EXOC5 stretch occupies residues M1–T370.

It belongs to the SEC6 family. In terms of assembly, interacts with EXOC2, EXOC4 and EXOC5; may be part of the exocyst.

Its subcellular location is the cytoplasmic vesicle. It localises to the secretory vesicle. In terms of biological role, as part of the exocyst, may play a role in regulated exocytosis of insulin granules. This Bos taurus (Bovine) protein is Exocyst complex component 3-like protein (EXOC3L1).